The following is a 114-amino-acid chain: T cell receptor beta variable 6-4 (114 aa).

An N-terminal signal peptide occupies residues 1-21 (MSIRLLCCVAFSLLWAGPVTA). Residues 22–114 (GITQAPTSQI…TSVYFCASSD (93 aa)) form the Ig-like domain. Cys42 and Cys110 are oxidised to a cystine.

In terms of assembly, alpha-beta TR is a heterodimer composed of an alpha and beta chain; disulfide-linked. The alpha-beta TR is associated with the transmembrane signaling CD3 coreceptor proteins to form the TR-CD3 (TcR or TCR). The assembly of alpha-beta TR heterodimers with CD3 occurs in the endoplasmic reticulum where a single alpha-beta TR heterodimer associates with one CD3D-CD3E heterodimer, one CD3G-CD3E heterodimer and one CD247 homodimer forming a stable octameric structure. CD3D-CD3E and CD3G-CD3E heterodimers preferentially associate with TR alpha and TR beta chains, respectively. The association of the CD247 homodimer is the last step of TcR assembly in the endoplasmic reticulum and is required for transport to the cell surface.

It localises to the cell membrane. Its function is as follows. V region of the variable domain of T cell receptor (TR) beta chain that participates in the antigen recognition. Alpha-beta T cell receptors are antigen specific receptors which are essential to the immune response and are present on the cell surface of T lymphocytes. Recognize peptide-major histocompatibility (MH) (pMH) complexes that are displayed by antigen presenting cells (APC), a prerequisite for efficient T cell adaptive immunity against pathogens. Binding of alpha-beta TR to pMH complex initiates TR-CD3 clustering on the cell surface and intracellular activation of LCK that phosphorylates the ITAM motifs of CD3G, CD3D, CD3E and CD247 enabling the recruitment of ZAP70. In turn ZAP70 phosphorylates LAT, which recruits numerous signaling molecules to form the LAT signalosome. The LAT signalosome propagates signal branching to three major signaling pathways, the calcium, the mitogen-activated protein kinase (MAPK) kinase and the nuclear factor NF-kappa-B (NF-kB) pathways, leading to the mobilization of transcription factors that are critical for gene expression and essential for T cell growth and differentiation. The T cell repertoire is generated in the thymus, by V-(D)-J rearrangement. This repertoire is then shaped by intrathymic selection events to generate a peripheral T cell pool of self-MH restricted, non-autoaggressive T cells. Post-thymic interaction of alpha-beta TR with the pMH complexes shapes TR structural and functional avidity. The protein is T cell receptor beta variable 6-4 of Homo sapiens (Human).